The primary structure comprises 417 residues: Serine hydroxymethyltransferase (417 aa).

(6S)-5,6,7,8-tetrahydrofolate contacts are provided by residues L121 and 125-127 (GHL). K229 is modified (N6-(pyridoxal phosphate)lysine). 355-357 (SPF) contributes to the (6S)-5,6,7,8-tetrahydrofolate binding site.

This sequence belongs to the SHMT family. In terms of assembly, homodimer. It depends on pyridoxal 5'-phosphate as a cofactor.

It is found in the cytoplasm. The catalysed reaction is (6R)-5,10-methylene-5,6,7,8-tetrahydrofolate + glycine + H2O = (6S)-5,6,7,8-tetrahydrofolate + L-serine. Its pathway is one-carbon metabolism; tetrahydrofolate interconversion. It functions in the pathway amino-acid biosynthesis; glycine biosynthesis; glycine from L-serine: step 1/1. Catalyzes the reversible interconversion of serine and glycine with tetrahydrofolate (THF) serving as the one-carbon carrier. This reaction serves as the major source of one-carbon groups required for the biosynthesis of purines, thymidylate, methionine, and other important biomolecules. Also exhibits THF-independent aldolase activity toward beta-hydroxyamino acids, producing glycine and aldehydes, via a retro-aldol mechanism. This is Serine hydroxymethyltransferase from Shewanella putrefaciens (strain CN-32 / ATCC BAA-453).